We begin with the raw amino-acid sequence, 367 residues long: 4-hydroxy-3-methylbut-2-en-1-yl diphosphate synthase (flavodoxin) (367 aa).

4 residues coordinate [4Fe-4S] cluster: C265, C268, C300, and E307.

The protein belongs to the IspG family. The cofactor is [4Fe-4S] cluster.

The catalysed reaction is (2E)-4-hydroxy-3-methylbut-2-enyl diphosphate + oxidized [flavodoxin] + H2O + 2 H(+) = 2-C-methyl-D-erythritol 2,4-cyclic diphosphate + reduced [flavodoxin]. It functions in the pathway isoprenoid biosynthesis; isopentenyl diphosphate biosynthesis via DXP pathway; isopentenyl diphosphate from 1-deoxy-D-xylulose 5-phosphate: step 5/6. Its function is as follows. Converts 2C-methyl-D-erythritol 2,4-cyclodiphosphate (ME-2,4cPP) into 1-hydroxy-2-methyl-2-(E)-butenyl 4-diphosphate. This is 4-hydroxy-3-methylbut-2-en-1-yl diphosphate synthase (flavodoxin) from Bacillus anthracis.